The sequence spans 421 residues: UDP-N-acetylglucosamine 1-carboxyvinyltransferase 1 (421 aa).

22 to 23 (KN) serves as a coordination point for phosphoenolpyruvate. Arginine 94 lines the UDP-N-acetyl-alpha-D-glucosamine pocket. Cysteine 118 acts as the Proton donor in catalysis. 2-(S-cysteinyl)pyruvic acid O-phosphothioketal is present on cysteine 118. Residues 123 to 127 (RPIEL), aspartate 310, and valine 332 each bind UDP-N-acetyl-alpha-D-glucosamine.

Belongs to the EPSP synthase family. MurA subfamily.

It localises to the cytoplasm. The catalysed reaction is phosphoenolpyruvate + UDP-N-acetyl-alpha-D-glucosamine = UDP-N-acetyl-3-O-(1-carboxyvinyl)-alpha-D-glucosamine + phosphate. The protein operates within cell wall biogenesis; peptidoglycan biosynthesis. In terms of biological role, cell wall formation. Adds enolpyruvyl to UDP-N-acetylglucosamine. The protein is UDP-N-acetylglucosamine 1-carboxyvinyltransferase 1 of Clostridium perfringens (strain 13 / Type A).